Consider the following 416-residue polypeptide: Glutamyl-tRNA reductase (416 aa).

Substrate contacts are provided by residues 46–49, Ser97, 102–104, and Gln108; these read TCNR and DHE. The active-site Nucleophile is the Cys47. 178–183 contributes to the NADP(+) binding site; the sequence is GAGMAA.

It belongs to the glutamyl-tRNA reductase family. In terms of assembly, homodimer.

The catalysed reaction is (S)-4-amino-5-oxopentanoate + tRNA(Glu) + NADP(+) = L-glutamyl-tRNA(Glu) + NADPH + H(+). It participates in porphyrin-containing compound metabolism; protoporphyrin-IX biosynthesis; 5-aminolevulinate from L-glutamyl-tRNA(Glu): step 1/2. Catalyzes the NADPH-dependent reduction of glutamyl-tRNA(Glu) to glutamate 1-semialdehyde (GSA). The protein is Glutamyl-tRNA reductase of Aeropyrum pernix (strain ATCC 700893 / DSM 11879 / JCM 9820 / NBRC 100138 / K1).